The primary structure comprises 259 residues: 3-deoxy-manno-octulosonate cytidylyltransferase (259 aa).

Belongs to the KdsB family.

The protein resides in the cytoplasm. It catalyses the reaction 3-deoxy-alpha-D-manno-oct-2-ulosonate + CTP = CMP-3-deoxy-beta-D-manno-octulosonate + diphosphate. It participates in nucleotide-sugar biosynthesis; CMP-3-deoxy-D-manno-octulosonate biosynthesis; CMP-3-deoxy-D-manno-octulosonate from 3-deoxy-D-manno-octulosonate and CTP: step 1/1. The protein operates within bacterial outer membrane biogenesis; lipopolysaccharide biosynthesis. Functionally, activates KDO (a required 8-carbon sugar) for incorporation into bacterial lipopolysaccharide in Gram-negative bacteria. This Xanthomonas oryzae pv. oryzae (strain KACC10331 / KXO85) protein is 3-deoxy-manno-octulosonate cytidylyltransferase.